A 268-amino-acid chain; its full sequence is Tryptophan synthase alpha chain (268 aa).

Residues E49 and D60 each act as proton acceptor in the active site.

It belongs to the TrpA family. Tetramer of two alpha and two beta chains.

It carries out the reaction (1S,2R)-1-C-(indol-3-yl)glycerol 3-phosphate + L-serine = D-glyceraldehyde 3-phosphate + L-tryptophan + H2O. It functions in the pathway amino-acid biosynthesis; L-tryptophan biosynthesis; L-tryptophan from chorismate: step 5/5. Functionally, the alpha subunit is responsible for the aldol cleavage of indoleglycerol phosphate to indole and glyceraldehyde 3-phosphate. This is Tryptophan synthase alpha chain from Shigella boydii serotype 18 (strain CDC 3083-94 / BS512).